The chain runs to 334 residues: MKTIAMTIIGAGSFGTALAIALARNGHSVLLWGYNPQHIKKLQEQRCNQVYLPDIRFPENLLLEASLETAITASDNILIAVPSHVFHQVLYNIQPYLDQHSRVIWATKGLEHGTGRFLQEVAREILGEKIPLAVFSGPTFAKELAIGWPTAMTIAASDAEFGKELQQLFHCDKSFRVYKSSDMIGVQLGGAVKNVIAIGAGISDGMGFGANARIALITRGLAEISRLGSAMGAELSTFMGMTGLGDLVLTCTDNQSRNRRFGILLGKGIDIKEAEKQIGQVVEGYLNTKEVYTLAKRIGVEMPIVEQIYQILYCGKNITEAANTLLSRTLKDEI.

NADPH-binding residues include Ser-13, Phe-14, and Lys-108. Sn-glycerol 3-phosphate-binding residues include Lys-108, Gly-137, and Thr-139. Ala-141 contributes to the NADPH binding site. Sn-glycerol 3-phosphate-binding residues include Lys-193, Asp-246, Ser-256, Arg-257, and Asn-258. Lys-193 serves as the catalytic Proton acceptor. Residue Arg-257 participates in NADPH binding. The NADPH site is built by Val-281 and Glu-283.

The protein belongs to the NAD-dependent glycerol-3-phosphate dehydrogenase family.

It is found in the cytoplasm. The enzyme catalyses sn-glycerol 3-phosphate + NAD(+) = dihydroxyacetone phosphate + NADH + H(+). It catalyses the reaction sn-glycerol 3-phosphate + NADP(+) = dihydroxyacetone phosphate + NADPH + H(+). It participates in membrane lipid metabolism; glycerophospholipid metabolism. Its function is as follows. Catalyzes the reduction of the glycolytic intermediate dihydroxyacetone phosphate (DHAP) to sn-glycerol 3-phosphate (G3P), the key precursor for phospholipid synthesis. This is Glycerol-3-phosphate dehydrogenase [NAD(P)+] from Bartonella tribocorum (strain CIP 105476 / IBS 506).